The primary structure comprises 528 residues: MHSSNVSTHGMAVAPHHLASQSALAILREGGSAIEAMVAAAAAIAVVYPHMNGLGGDGFWLIVPPEGDPIAIDASGAAGSLATLEAYAGQRHIPNRGPQAALTVAGTVSGWVEALRISRDLTGRALPVARLLADAIGYAEDGIPVTASQAHATASKLEELRHQPGFSETWLVAGEAPRPGSRFRQPALAGTLRMLASDGLDSFYRGPLAERLAQGMAALGMPITLGDLQAHRARRPGPLTLQHQQGTLWNLAPPTQGLVSLAILGITDRLKMADADDAQTVHRIVEATKRAFALRDAHITDPRHLDVDVQQLLTPEALQPLADSIDDASASPWGGGKGPGDTVWMGVVDNSGLAVSFIQSIYHEFGSGVVLPDTGIVWQNRGAAFSLDPQHLLALAPGKQPFHTLNPAAARLNDGRVMVYGSMGGDGQPQTQAALFTRYILQGVPLQESISRPRWLLGRTWGQSSDSLKLEGRFAPACIARLRELGHDVEVLADFSEAMGHAGAIVRHPNGLLEGATDPRSNGAAAGY.

The active-site Nucleophile is Thr-342. 424–425 (GG) contributes to the substrate binding site.

It belongs to the gamma-glutamyltransferase family. As to quaternary structure, heterodimer that consists of a 35.5 kDa large (alpha) subunit and a 20 kDa small (beta) subunit, which are synthesized from a single polypeptide. Cleaved by autocatalysis into a large (alpha) and a small (beta) subunit.

The enzyme catalyses oxamate + H2O = oxalate + NH4(+). Functionally, involved in the uric acid degradation pathway. Catalyzes the conversion of oxamate to oxalate. This is Oxamate amidohydrolase proenzyme from Klebsiella pneumoniae subsp. pneumoniae (strain ATCC 700721 / MGH 78578).